We begin with the raw amino-acid sequence, 666 residues long: Probable potassium transport system protein Kup (666 aa).

A run of 12 helical transmembrane segments spans residues 16 to 36 (GFII…LYTM), 58 to 78 (ISLI…LVAL), 99 to 119 (TPWL…DGAL), 141 to 161 (IFQN…LLFA), 167 to 187 (TGVI…FLGI), 221 to 241 (IFIL…YSDL), 253 to 273 (WPFV…WILA), 292 to 312 (FTMH…QALI), 343 to 363 (TYIP…VLLF), 373 to 393 (YGLA…FFLI), 402 to 422 (VLLM…ASAV), and 424 to 444 (FMHG…IMTI).

The protein belongs to the HAK/KUP transporter (TC 2.A.72) family.

The protein localises to the cell membrane. The catalysed reaction is K(+)(in) + H(+)(in) = K(+)(out) + H(+)(out). Transport of potassium into the cell. Likely operates as a K(+):H(+) symporter. The chain is Probable potassium transport system protein Kup from Streptococcus agalactiae serotype V (strain ATCC BAA-611 / 2603 V/R).